The chain runs to 488 residues: Probable cytosol aminopeptidase (488 aa).

Mn(2+) is bound by residues K254 and D259. K266 is an active-site residue. Mn(2+) contacts are provided by D277, D336, and E338. Residue R340 is part of the active site.

This sequence belongs to the peptidase M17 family. Mn(2+) is required as a cofactor.

It localises to the cytoplasm. It catalyses the reaction Release of an N-terminal amino acid, Xaa-|-Yaa-, in which Xaa is preferably Leu, but may be other amino acids including Pro although not Arg or Lys, and Yaa may be Pro. Amino acid amides and methyl esters are also readily hydrolyzed, but rates on arylamides are exceedingly low.. It carries out the reaction Release of an N-terminal amino acid, preferentially leucine, but not glutamic or aspartic acids.. Functionally, presumably involved in the processing and regular turnover of intracellular proteins. Catalyzes the removal of unsubstituted N-terminal amino acids from various peptides. The protein is Probable cytosol aminopeptidase of Roseiflexus castenholzii (strain DSM 13941 / HLO8).